The primary structure comprises 490 residues: MMLSKLDALTLDNSFAALPDTFYTRLAAQPLGRPRLLHANAEAAALIGLDPAELHTQAFLEVASGQRPLPGGDTLAAVYSGHQFGVWAGQLGDGRAHLLGEVRGPGGSWELQLKGAGLTPYSRMGDGRAVLRSSVREYLASEAMHGLGIPTTRALALVVSDDPVMRETRETAAIVTRMSPSFVRFGSFEHWSSRRDGERLRILADYVIDRFYPQCREANGEHGDVLALLREVSQRTAHLMADWQSVGFCHGVMNTDNMSILGLTLDYGPFGFMDAFQLGHVCNHSDSEGRYAWNRQPSVALWNLYRLGGSLHGLVPDADALRGVLAEYETLFTQAFHARMGAKLGLSVWQSDDEALLDDLLRLMHDSRADFTLTFRALAQAVRGQTQPFLDYFIDREAAQAWWSRLAARHACDGRAAAVRAEGMDRVNPLYVLRNHLAEQAIRAAQQGDASEIDRLLGLLRRPYDLQPGAEAYAALPPDWAAGLSVSCSS.

Residues G92, G94, R95, K114, D126, G127, R177, and R184 each contribute to the ATP site. D256 serves as the catalytic Proton acceptor. N257 and D266 together coordinate Mg(2+). Residue D266 participates in ATP binding.

Belongs to the SELO family. Requires Mg(2+) as cofactor. The cofactor is Mn(2+).

The enzyme catalyses L-seryl-[protein] + ATP = 3-O-(5'-adenylyl)-L-seryl-[protein] + diphosphate. It carries out the reaction L-threonyl-[protein] + ATP = 3-O-(5'-adenylyl)-L-threonyl-[protein] + diphosphate. The catalysed reaction is L-tyrosyl-[protein] + ATP = O-(5'-adenylyl)-L-tyrosyl-[protein] + diphosphate. It catalyses the reaction L-histidyl-[protein] + UTP = N(tele)-(5'-uridylyl)-L-histidyl-[protein] + diphosphate. The enzyme catalyses L-seryl-[protein] + UTP = O-(5'-uridylyl)-L-seryl-[protein] + diphosphate. It carries out the reaction L-tyrosyl-[protein] + UTP = O-(5'-uridylyl)-L-tyrosyl-[protein] + diphosphate. Its function is as follows. Nucleotidyltransferase involved in the post-translational modification of proteins. It can catalyze the addition of adenosine monophosphate (AMP) or uridine monophosphate (UMP) to a protein, resulting in modifications known as AMPylation and UMPylation. This chain is Protein nucleotidyltransferase YdiU, found in Bordetella avium (strain 197N).